We begin with the raw amino-acid sequence, 334 residues long: Probable fructose-bisphosphate aldolase class 1 (334 aa).

The protein belongs to the class I fructose-bisphosphate aldolase family.

It carries out the reaction beta-D-fructose 1,6-bisphosphate = D-glyceraldehyde 3-phosphate + dihydroxyacetone phosphate. Its pathway is carbohydrate degradation; glycolysis; D-glyceraldehyde 3-phosphate and glycerone phosphate from D-glucose: step 4/4. The sequence is that of Probable fructose-bisphosphate aldolase class 1 from Xanthomonas axonopodis pv. citri (strain 306).